The sequence spans 194 residues: FK506-binding protein 3 (194 aa).

Residues 1 to 19 form the signal peptide; that stretch reads MNKFLIALLVLATLAVSFS. A PPIase FKBP-type domain is found at 44-133; that stretch reads GDYISLKYVG…YFDLEVVSIE (90 aa). The helical transmembrane segment at 148–168 threads the bilayer; it reads VGTIIAFSMLAGFIVLVKFII. The disordered stretch occupies residues 173–194; it reads DESNSKKPAPGKPKKTKAAKQN. Residues 184 to 194 are compositionally biased toward basic residues; it reads KPKKTKAAKQN.

Belongs to the FKBP-type PPIase family.

It localises to the membrane. It catalyses the reaction [protein]-peptidylproline (omega=180) = [protein]-peptidylproline (omega=0). With respect to regulation, inhibited by both FK506 and rapamycin. PPIases accelerate the folding of proteins by catalyzing the cis-trans isomerization of proline imidic peptide bonds in oligopeptides. This is FK506-binding protein 3 (fkbp3) from Dictyostelium discoideum (Social amoeba).